We begin with the raw amino-acid sequence, 468 residues long: MSSILPFTPPVVKRLLGWKKSASGSSGAGGGGEQNGQEEKWCEKAVKSLVKKLKKTGQLDELEKAITTQNRNTKCVTIPSNCSEIWGLSTPNTIEQWDTSGLYSYPDQTRSLDGRLQVSHRKGLPHVIYCRLWRWPDLHSHHELRAIETCEYAFNLKKDEVCVNPYHYQRVETPVLPPVLVPRHTEILTELPPLDDYTNSIPENTNFPTGIEPPNNYIPETPPPGYISEDGEASDQQMNQSMDTGSPAELSPSTLSPVNHGMDLQPVTYSEPAFWCSIAYYELNQRVGETFHASQPSLTVDGFTDPSNSERFCLGLLSNVNRNATVEMTRRHIGRGVRLYYIGGEVFAECLSDSAIFVQSPNCNQRYGWHPATVCKIPPGCNLKIFNNQEFAALLAQSVNQGFEAVYQLTRMCTIRMSFVKGWGAEYRRQTVTSTPCWIELHLNGPLQWLDKVLTQMGSPSVRCSSMS.

One can recognise an MH1 domain in the interval 10 to 177 (PVVKRLLGWK…YQRVETPVLP (168 aa)). 4 residues coordinate Zn(2+): Cys-75, Cys-150, Cys-162, and His-167. The disordered stretch occupies residues 224–254 (PGYISEDGEASDQQMNQSMDTGSPAELSPST). Residues 234–244 (SDQQMNQSMDT) show a composition bias toward polar residues. The region spanning 275-468 (WCSIAYYELN…SPSVRCSSMS (194 aa)) is the MH2 domain.

It belongs to the dwarfin/SMAD family.

The protein resides in the cytoplasm. It is found in the nucleus. Promotes differentiation of dorsal tissues. May be involved in the mediation of Ndr2 signaling during mesoderm and axis formation during embryogenesis. The chain is Mothers against decapentaplegic homolog 2 (smad2) from Danio rerio (Zebrafish).